A 336-amino-acid chain; its full sequence is tRNA-dihydrouridine(20/20a) synthase (336 aa).

FMN is bound by residues Pro24–Met26 and Gln77. Cys107 serves as the catalytic Proton donor. FMN-binding positions include Lys146, His178, Asn218–Gly220, and Gly240–Arg241.

This sequence belongs to the Dus family. DusA subfamily. The cofactor is FMN.

It carries out the reaction 5,6-dihydrouridine(20) in tRNA + NADP(+) = uridine(20) in tRNA + NADPH + H(+). The enzyme catalyses 5,6-dihydrouridine(20) in tRNA + NAD(+) = uridine(20) in tRNA + NADH + H(+). It catalyses the reaction 5,6-dihydrouridine(20a) in tRNA + NADP(+) = uridine(20a) in tRNA + NADPH + H(+). The catalysed reaction is 5,6-dihydrouridine(20a) in tRNA + NAD(+) = uridine(20a) in tRNA + NADH + H(+). Functionally, catalyzes the synthesis of 5,6-dihydrouridine (D), a modified base found in the D-loop of most tRNAs, via the reduction of the C5-C6 double bond in target uridines. Specifically modifies U20 and U20a in tRNAs. The chain is tRNA-dihydrouridine(20/20a) synthase from Pseudomonas syringae pv. tomato (strain ATCC BAA-871 / DC3000).